The chain runs to 296 residues: Light-independent protochlorophyllide reductase iron-sulfur ATP-binding protein (296 aa).

Positions 1–20 are disordered; it reads MTTTLSRPTDGEGSVQVQQD. Residues 39 to 44 and Lys68 contribute to the ATP site; that span reads GIGKST. Residue Ser43 participates in Mg(2+) binding. The [4Fe-4S] cluster site is built by Cys124 and Cys158. ATP is bound at residue 209–210; it reads NR.

It belongs to the NifH/BchL/ChlL family. In terms of assembly, homodimer. Protochlorophyllide reductase is composed of three subunits; ChlL, ChlN and ChlB. Requires [4Fe-4S] cluster as cofactor.

It catalyses the reaction chlorophyllide a + oxidized 2[4Fe-4S]-[ferredoxin] + 2 ADP + 2 phosphate = protochlorophyllide a + reduced 2[4Fe-4S]-[ferredoxin] + 2 ATP + 2 H2O. The protein operates within porphyrin-containing compound metabolism; chlorophyll biosynthesis (light-independent). Component of the dark-operative protochlorophyllide reductase (DPOR) that uses Mg-ATP and reduced ferredoxin to reduce ring D of protochlorophyllide (Pchlide) to form chlorophyllide a (Chlide). This reaction is light-independent. The L component serves as a unique electron donor to the NB-component of the complex, and binds Mg-ATP. The sequence is that of Light-independent protochlorophyllide reductase iron-sulfur ATP-binding protein from Synechococcus sp. (strain CC9902).